The primary structure comprises 376 residues: MKIVVDENMPYVEPLFGALGEIIPVNGRTLTPEQVQDADVLLVRSVTRVNAALLDANSKLKFVGSATIGTDHVDLAYLAGRGIPFSNAPGCNATAVGEFAFIAMLELAARFNSPLKGKVVGIVGAGNTGSATAKCLEAYGIKVLLNDPIKAAEGDPRHFVSLETLLHEADIISLHVPITRTGEHKTLHLFDEARMMSLKPNTWLLNCCRGDVIDNQALIKVKEQRDDLKLVLDVWEGEPNPMPELVPFAEFATPHIAGYSLEGKARGTFMLYQKLCELLAIPATKRLSELLPPFHFKAVELEQAPDEKALLQLARFVYDLRDDDAVFRNGFARSNGFDTMRKNHKHRREFSALALAYHGQSEVDWLSNLGFSGVGR.

2 residues coordinate substrate: S45 and T67. An NAD(+)-binding site is contributed by D147. The active site involves R209. D233 contacts NAD(+). The active site involves E238. H255 functions as the Proton donor in the catalytic mechanism. G258 lines the NAD(+) pocket. Y259 is a binding site for substrate.

This sequence belongs to the D-isomer specific 2-hydroxyacid dehydrogenase family. PdxB subfamily. Homodimer.

The protein resides in the cytoplasm. It carries out the reaction 4-phospho-D-erythronate + NAD(+) = (R)-3-hydroxy-2-oxo-4-phosphooxybutanoate + NADH + H(+). Its pathway is cofactor biosynthesis; pyridoxine 5'-phosphate biosynthesis; pyridoxine 5'-phosphate from D-erythrose 4-phosphate: step 2/5. In terms of biological role, catalyzes the oxidation of erythronate-4-phosphate to 3-hydroxy-2-oxo-4-phosphonooxybutanoate. The sequence is that of Erythronate-4-phosphate dehydrogenase from Shewanella sp. (strain ANA-3).